The following is a 305-amino-acid chain: Aspartate carbamoyltransferase catalytic subunit (305 aa).

Carbamoyl phosphate contacts are provided by Arg56 and Thr57. Lys84 contacts L-aspartate. Arg106, His136, and Gln139 together coordinate carbamoyl phosphate. The L-aspartate site is built by Arg169 and Arg221. Carbamoyl phosphate contacts are provided by Ala262 and Pro263.

It belongs to the aspartate/ornithine carbamoyltransferase superfamily. ATCase family. Heterododecamer (2C3:3R2) of six catalytic PyrB chains organized as two trimers (C3), and six regulatory PyrI chains organized as three dimers (R2).

The catalysed reaction is carbamoyl phosphate + L-aspartate = N-carbamoyl-L-aspartate + phosphate + H(+). It participates in pyrimidine metabolism; UMP biosynthesis via de novo pathway; (S)-dihydroorotate from bicarbonate: step 2/3. In terms of biological role, catalyzes the condensation of carbamoyl phosphate and aspartate to form carbamoyl aspartate and inorganic phosphate, the committed step in the de novo pyrimidine nucleotide biosynthesis pathway. The protein is Aspartate carbamoyltransferase catalytic subunit of Streptococcus sanguinis (strain SK36).